Reading from the N-terminus, the 114-residue chain is UPF0342 protein LVIS_1488 (114 aa).

The protein belongs to the UPF0342 family.

The polypeptide is UPF0342 protein LVIS_1488 (Levilactobacillus brevis (strain ATCC 367 / BCRC 12310 / CIP 105137 / JCM 1170 / LMG 11437 / NCIMB 947 / NCTC 947) (Lactobacillus brevis)).